The primary structure comprises 112 residues: Nucleoid-associated protein lpg2755 (112 aa).

It belongs to the YbaB/EbfC family. In terms of assembly, homodimer.

Its subcellular location is the cytoplasm. The protein resides in the nucleoid. Binds to DNA and alters its conformation. May be involved in regulation of gene expression, nucleoid organization and DNA protection. The sequence is that of Nucleoid-associated protein lpg2755 from Legionella pneumophila subsp. pneumophila (strain Philadelphia 1 / ATCC 33152 / DSM 7513).